The primary structure comprises 305 residues: Protein FdhE homolog (305 aa).

Belongs to the FdhE family.

It is found in the cytoplasm. Necessary for formate dehydrogenase activity. The chain is Protein FdhE homolog from Haemophilus ducreyi (strain 35000HP / ATCC 700724).